A 178-amino-acid polypeptide reads, in one-letter code: Deoxycytidylate deaminase (178 aa).

The CMP/dCMP-type deaminase domain maps to 14–145 (EWPEYFMAVA…EETTAARLLF (132 aa)). A Zn(2+)-binding site is contributed by histidine 84. Catalysis depends on glutamate 86, which acts as the Proton donor. Residues cysteine 110 and cysteine 113 each contribute to the Zn(2+) site. At serine 174 the chain carries Phosphoserine.

This sequence belongs to the cytidine and deoxycytidylate deaminase family. In terms of assembly, homohexamer. Zn(2+) serves as cofactor.

It carries out the reaction dCMP + H2O + H(+) = dUMP + NH4(+). It catalyses the reaction 5-hydroxymethyl-dCMP + H2O + H(+) = 5-hydroxymethyl-dUMP + NH4(+). Its activity is regulated as follows. Allosteric enzyme whose activity is greatly influenced by the end products of its metabolic pathway, dCTP and dTTP. Its function is as follows. Catalyzes the deamination of dCMP to dUMP, providing the nucleoside monophosphate substrate for the thymidylate synthase/TYMS. Also, part of a nucleotide salvage pathway that eliminates epigenetically modified 5-hydroxymethyl-dCMP (hmdCMP) in a two-step process entailing deamination to cytotoxic 5-hydroxymethyl-dUMP (hmdUMP), followed by its hydrolysis into 5-hydroxymethyluracil (hmU) and 2-deoxy-D-ribose 5-phosphate (deoxyribosephosphate). Catalyzes the first step in that pathway, the deamination of 5-hydroxymethyl-dCMP (hmdCMP). The sequence is that of Deoxycytidylate deaminase from Mus musculus (Mouse).